The sequence spans 341 residues: Ketol-acid reductoisomerase (NADP(+)) (341 aa).

One can recognise a KARI N-terminal Rossmann domain in the interval 2-181 (AKVYYNGDAN…GAARAGVLET (180 aa)). Residues 25 to 28 (YGSQ), Arg48, Ser52, and 82 to 85 (DEKQ) contribute to the NADP(+) site. His107 is a catalytic residue. Gly133 provides a ligand contact to NADP(+). Residues 182–327 (TFKEETETDL…RELRSMMPFV (146 aa)) enclose the KARI C-terminal knotted domain. The Mg(2+) site is built by Asp190, Glu194, Glu226, and Glu230. Ser251 provides a ligand contact to substrate.

Belongs to the ketol-acid reductoisomerase family. Requires Mg(2+) as cofactor.

It catalyses the reaction (2R)-2,3-dihydroxy-3-methylbutanoate + NADP(+) = (2S)-2-acetolactate + NADPH + H(+). The enzyme catalyses (2R,3R)-2,3-dihydroxy-3-methylpentanoate + NADP(+) = (S)-2-ethyl-2-hydroxy-3-oxobutanoate + NADPH + H(+). The protein operates within amino-acid biosynthesis; L-isoleucine biosynthesis; L-isoleucine from 2-oxobutanoate: step 2/4. It participates in amino-acid biosynthesis; L-valine biosynthesis; L-valine from pyruvate: step 2/4. Functionally, involved in the biosynthesis of branched-chain amino acids (BCAA). Catalyzes an alkyl-migration followed by a ketol-acid reduction of (S)-2-acetolactate (S2AL) to yield (R)-2,3-dihydroxy-isovalerate. In the isomerase reaction, S2AL is rearranged via a Mg-dependent methyl migration to produce 3-hydroxy-3-methyl-2-ketobutyrate (HMKB). In the reductase reaction, this 2-ketoacid undergoes a metal-dependent reduction by NADPH to yield (R)-2,3-dihydroxy-isovalerate. The protein is Ketol-acid reductoisomerase (NADP(+)) of Geobacillus thermodenitrificans (strain NG80-2).